Reading from the N-terminus, the 143-residue chain is Hemoglobin subunit alpha (143 aa).

At serine 2 the chain carries N-acetylserine. Residues 2–143 (SLSDKDKAAV…VALALAEKYR (142 aa)) enclose the Globin domain. Residue histidine 60 coordinates O2. Histidine 89 contacts heme b.

Belongs to the globin family. As to quaternary structure, heterotetramer of two alpha chains and two beta chains. As to expression, red blood cells.

Involved in oxygen transport from the lung to the various peripheral tissues. The polypeptide is Hemoglobin subunit alpha (hba) (Artedidraco orianae (Barbeled plunderfish)).